A 451-amino-acid polypeptide reads, in one-letter code: Homeobox protein meis3-B (451 aa).

The interval 33-64 (HHSLSQSTPYGSTGAAHRVPMPPGMGSNDGLK) is disordered. Residues 34–43 (HSLSQSTPYG) are compositionally biased toward polar residues. The region spanning 102–185 (GGDVCSSDSF…PIDLVIDDRD (84 aa)) is the MEIS N-terminal domain. Residues 206-272 (NNTWIRDHDE…RDKKRNKKRG (67 aa)) form a disordered region. A compositionally biased stretch (low complexity) spans 218–230 (STHSGTPGPSSGG). Positions 231-242 (LASQSGDNSSEQ) are enriched in polar residues. Positions 267–329 (RNKKRGIFPK…NARRRIVQPM (63 aa)) form a DNA-binding region, homeobox.

It belongs to the TALE/MEIS homeobox family.

The protein resides in the nucleus. Its function is as follows. A caudalizing protein which is required to pattern the anterior/posterior (A/P) axis during central nervous system (CNS) formation. Inhibits anterior neural expression and acts as a transcriptional activator to induce posterior neural gene expression. Maintains a proper A/P balance required for hindbrain formation by activating the FGF/MAPK pathway, which modulates the planar cell polarity (PCP) pathway. Interacts with retinoid signaling during hindbrain patterning. This is Homeobox protein meis3-B (meis3-b) from Xenopus laevis (African clawed frog).